A 200-amino-acid polypeptide reads, in one-letter code: Recombination protein RecR (200 aa).

A C4-type zinc finger spans residues 57 to 72 (CSQCRTFTEQETCAIC). One can recognise a Toprim domain in the interval 81-176 (GLLCVVEMPA…KVSRIAHGIP (96 aa)).

It belongs to the RecR family.

In terms of biological role, may play a role in DNA repair. It seems to be involved in an RecBC-independent recombinational process of DNA repair. It may act with RecF and RecO. The polypeptide is Recombination protein RecR (Actinobacillus succinogenes (strain ATCC 55618 / DSM 22257 / CCUG 43843 / 130Z)).